We begin with the raw amino-acid sequence, 66 residues long: Surface composition regulator (66 aa).

It belongs to the GlgS family.

Functionally, major determinant of cell surface composition. Negatively regulates motility, adhesion and synthesis of biofilm exopolysaccharides. This chain is Surface composition regulator, found in Escherichia coli O127:H6 (strain E2348/69 / EPEC).